Reading from the N-terminus, the 270-residue chain is MLLGSVPQLDRVAIHLGPFPVYWYGIIIGTGVLLGLWLATREGERLGIPKDTFVDLVLFAVPIAIICARAYYVAFEWEYYMQNPIQIINTRQGGLAIHGGLIGAVMTGIIYAKVKRISFWKLADIAAPSILLGQAIGRWGNFMNQEAHGGEVTRQFLEGLHLPDFIVNQMYIDGVYYHPTFLYESLWSFAGVILLLLLRKANLRRGELFFTYLIWYSIGRFFVEELRTDSLMLGPLRIAQVMSIGLIVISIIFIIVRRKTGQADKRYLEK.

4 helical membrane passes run 19-39 (FPVY…LWLA), 53-73 (FVDL…AYYV), 92-112 (QGGL…IIYA), and 117-137 (ISFW…QAIG). Arginine 138 provides a ligand contact to a 1,2-diacyl-sn-glycero-3-phospho-(1'-sn-glycerol). 3 helical membrane passes run 178–198 (HPTF…LLLL), 206–226 (GELF…VEEL), and 236–256 (LRIA…FIIV).

The protein belongs to the Lgt family.

The protein localises to the cell membrane. The enzyme catalyses L-cysteinyl-[prolipoprotein] + a 1,2-diacyl-sn-glycero-3-phospho-(1'-sn-glycerol) = an S-1,2-diacyl-sn-glyceryl-L-cysteinyl-[prolipoprotein] + sn-glycerol 1-phosphate + H(+). It functions in the pathway protein modification; lipoprotein biosynthesis (diacylglyceryl transfer). Functionally, catalyzes the transfer of the diacylglyceryl group from phosphatidylglycerol to the sulfhydryl group of the N-terminal cysteine of a prolipoprotein, the first step in the formation of mature lipoproteins. This chain is Phosphatidylglycerol--prolipoprotein diacylglyceryl transferase, found in Bacillus cytotoxicus (strain DSM 22905 / CIP 110041 / 391-98 / NVH 391-98).